The primary structure comprises 742 residues: Synaptic vesicle glycoprotein 2A (742 aa).

Positions 1-57 are interaction with SYT1; it reads MEEGFRDRAAFIRGAKDIAKEVKKHAAKKVVKGLDRVQDEYSRRSYSRFEEEEDDDD. The Cytoplasmic segment spans residues 1-169; the sequence is MEEGFRDRAA…GHGRFQWTLY (169 aa). Positions 40–49 are enriched in basic and acidic residues; that stretch reads EYSRRSYSRF. The segment at 40–145 is disordered; it reads EYSRRSYSRF…RGEAQRRKDR (106 aa). 2 positions are modified to phosphoserine: S80 and S81. At T84 the chain carries Phosphothreonine. Residues 122–137 are compositionally biased toward gly residues; that stretch reads VRGGLSDGEGPPGGRG. S127 is subject to Phosphoserine. Residues 170–190 form a helical membrane-spanning segment; it reads FVLGLALMADGVEVFVVGFVL. The Extracellular segment spans residues 191-205; it reads PSAEKDMCLSDSNKG. Residues 206-226 traverse the membrane as a helical segment; that stretch reads MLGLIVYLGMMVGAFLWGGLA. Over 227-233 the chain is Cytoplasmic; sequence DRLGRRQ. Residues 234–254 form a helical membrane-spanning segment; the sequence is CLLISLSVNSVFAFFSSFVQG. The Extracellular segment spans residues 255-262; sequence YGTFLFCR. A helical membrane pass occupies residues 263–283; the sequence is LLSGVGIGGSIPIVFSYFSEF. At 284-294 the chain is on the cytoplasmic side; the sequence is LAQEKRGEHLS. The chain crosses the membrane as a helical span at residues 295–315; the sequence is WLCMFWMIGGVYAAAMAWAII. Residues 316–334 are Extracellular-facing; the sequence is PHYGWSFQMGSAYQFHSWR. Residues 335–355 form a helical membrane-spanning segment; the sequence is VFVLVCAFPSVFAIGALTTQP. Over 356–447 the chain is Cytoplasmic; sequence ESPRFFLENG…CFSPEYRRIT (92 aa). Residue S393 is modified to Phosphoserine. A helical membrane pass occupies residues 448–468; the sequence is LMMMGVWFTMSFSYYGLTVWF. Over 469-598 the chain is Extracellular; the sequence is PDMIRHLQAV…GTGEGAYMVY (130 aa). Y480 bears the Phosphotyrosine mark. N-linked (GlcNAc...) asparagine glycans are attached at residues N498 and N548. The N-linked (GlcNAc...) asparagine; alternate glycan is linked to N573. N-linked (HexNAc...) asparagine; alternate glycosylation occurs at N573. Residues 599 to 619 traverse the membrane as a helical segment; sequence FVSFLGTLAVLPGNIVSALLM. At 620–626 the chain is on the cytoplasmic side; the sequence is DKIGRLR. A helical membrane pass occupies residues 627–647; that stretch reads MLAGSSVLSCVSCFFLSFGNS. At 648 to 651 the chain is on the extracellular side; that stretch reads ESAM. Residues 652 to 672 traverse the membrane as a helical segment; it reads IALLCLFGGVSIASWNALDVL. At 673 to 685 the chain is on the cytoplasmic side; the sequence is TVELYPSDKRTTA. Residues 686–708 form a helical membrane-spanning segment; that stretch reads FGFLNALCKLAAVLGISIFTSFV. Topologically, residues 709–712 are extracellular; the sequence is GITK. The helical transmembrane segment at 713-731 threads the bilayer; that stretch reads AAPILFASAALALGSSLAL. Residues 732–742 lie on the Cytoplasmic side of the membrane; sequence KLPETRGQVLQ.

It belongs to the major facilitator superfamily. As to quaternary structure, interacts with SYT1/synaptotagmin-1 in a calcium-dependent manner. Binds the adapter protein complex AP-2. In terms of assembly, (Microbial infection) Interacts with C.botulinum neurotoxin type A1 and type A2 (BoNT/A, botA). Interaction is improved by glycosylation of SV2. (Microbial infection) Copurifies with C.botulinum neurotoxin type B (BoNT/B, botB) and synaptotagmin 1 (SYT1). Interaction does not require glycosylation of SV2 or SYT1 proteins. Another group finds only copurification with SYT1 and SYT2. As to quaternary structure, (Microbial infection) Interacts with C.botulinum neurotoxin type E (BoNT/E). Interaction requires glycosylation of SV2 proteins. In terms of assembly, (Microbial infection) Copurifies with C.botulinum neurotoxin type F (BoNT/F) and synaptotagmin 1 (SYT2). Another group finds only copurification with BoNT/F. Interaction requires SV2 glycosylation. Post-translationally, phosphorylation by CK1 of the N-terminal cytoplasmic domain regulates interaction with SYT1. N-glycosylated, on at least 3 residues. In terms of tissue distribution, widely expressed throughout the brain (at protein level). Expressed by neural and endocrine cells of brain and spinal cord.

The protein resides in the presynapse. It localises to the cytoplasmic vesicle. It is found in the secretory vesicle. The protein localises to the synaptic vesicle membrane. In terms of biological role, plays a role in the control of regulated secretion in neural and endocrine cells, enhancing selectively low-frequency neurotransmission. Positively regulates vesicle fusion by maintaining the readily releasable pool of secretory vesicles. Functionally, (Microbial infection) Receptor for C.botulinum neurotoxin type A (BoNT/A, botA); the toxin binds via extracellular loop 4. Restores uptake of BoNT/A in mouse cells that are deleted for SV2 receptor. Glycosylation of Asn-573 is not essential for receptor activity, but enhances uptake. Also serves as a receptor for the closely related C.botulinum neurotoxin type A2; glycosylation is not essential but enhances the interaction. Its function is as follows. Possible receptor for C.botulinum neurotoxin type D (BoNT/D, botD); BoNT/D does not bind to extracellular loop 4 as do BoNT/A and BoNT/E, nor to loop 1 or loop 3. Another group does not find a convincing interaction with SV2. (Microbial infection) Receptor for C.botulinum neurotoxin type E (BoNT/E); the toxin probably binds via extracellular loop 4 and requires glycosylation of Asn-573. Restores uptake of BoNT/E in mouse cells that are deleted for SV2 receptor. In terms of biological role, (Microbial infection) Receptor for C.botulinum neurotoxin type F (BoNT/F). Binding requires glycosylation of Asn-573. In Rattus norvegicus (Rat), this protein is Synaptic vesicle glycoprotein 2A (Sv2a).